The sequence spans 93 residues: U12-lycotoxin-Ls1a (93 aa).

Positions Met1–Ser18 are cleaved as a signal peptide. The propeptide occupies Glu19–Arg38.

It belongs to the neurotoxin 31 family. Post-translationally, contains 5 disulfide bonds. In terms of tissue distribution, expressed by the venom gland.

The protein resides in the secreted. The sequence is that of U12-lycotoxin-Ls1a from Lycosa singoriensis (Wolf spider).